The sequence spans 342 residues: Nucleoid-associated protein Shewana3_2426 (342 aa).

Belongs to the YejK family.

The protein localises to the cytoplasm. It is found in the nucleoid. The polypeptide is Nucleoid-associated protein Shewana3_2426 (Shewanella sp. (strain ANA-3)).